We begin with the raw amino-acid sequence, 106 residues long: Urease subunit beta (106 aa).

Belongs to the urease beta subunit family. Heterotrimer of UreA (gamma), UreB (beta) and UreC (alpha) subunits. Three heterotrimers associate to form the active enzyme.

The protein localises to the cytoplasm. It carries out the reaction urea + 2 H2O + H(+) = hydrogencarbonate + 2 NH4(+). Its pathway is nitrogen metabolism; urea degradation; CO(2) and NH(3) from urea (urease route): step 1/1. The sequence is that of Urease subunit beta from Prochlorococcus marinus (strain AS9601).